The chain runs to 340 residues: Replication factor C subunit 2 (340 aa).

Gly59–Thr66 is a binding site for ATP.

Belongs to the activator 1 small subunits family. As to quaternary structure, heteropentamer of subunits rfc1, rfc2, rfc3, rfc4 and rfc5 that forms a complex (RFC) with PCNA in the presence of ATP. Two other complexes exist where rfc1 can be replaced by either ctf18 or elg1 to form the ctf18-RFC or the elg1-RFC complexes respectively.

It localises to the nucleus. The elongation of primed DNA templates by DNA polymerase delta and epsilon requires the action of the accessory proteins PCNA and activator 1. Subunit 2 binds ATP and single-stranded DNA. This is Replication factor C subunit 2 (rfc2) from Schizosaccharomyces pombe (strain 972 / ATCC 24843) (Fission yeast).